The chain runs to 175 residues: MISIKSFQIGEKEIVIAILFDKKIQGITFSFDGEQFLQERVNALVEHLTNRGVKVNLEERDSELPALVYKILIGEIRNQDGLEYLSFEGTTPFEKKVYETLTKKVKRGEVITYGELAKMLRSSPRAIGGAMKRNPYPIIVPCHRVIASNNIGNYTPKREYKRFLLETEGVKTWTS.

Cysteine 142 serves as the catalytic Nucleophile; methyl group acceptor.

Belongs to the MGMT family.

The protein resides in the cytoplasm. The enzyme catalyses a 6-O-methyl-2'-deoxyguanosine in DNA + L-cysteinyl-[protein] = S-methyl-L-cysteinyl-[protein] + a 2'-deoxyguanosine in DNA. The catalysed reaction is a 4-O-methyl-thymidine in DNA + L-cysteinyl-[protein] = a thymidine in DNA + S-methyl-L-cysteinyl-[protein]. Functionally, involved in the cellular defense against the biological effects of O6-methylguanine (O6-MeG) and O4-methylthymine (O4-MeT) in DNA. Repairs the methylated nucleobase in DNA by stoichiometrically transferring the methyl group to a cysteine residue in the enzyme. This is a suicide reaction: the enzyme is irreversibly inactivated. This chain is Methylated-DNA--protein-cysteine methyltransferase, found in Thermococcus sibiricus (strain DSM 12597 / MM 739).